A 150-amino-acid polypeptide reads, in one-letter code: Large ribosomal subunit protein bL9 (150 aa).

It belongs to the bacterial ribosomal protein bL9 family.

Binds to the 23S rRNA. The protein is Large ribosomal subunit protein bL9 of Streptococcus pyogenes serotype M18 (strain MGAS8232).